A 450-amino-acid chain; its full sequence is Nuclear hormone receptor family member nhr-40 (450 aa).

Positions 28 to 103 (GTLCVVCSDF…MGMDPKAIQH (76 aa)) form a DNA-binding region, nuclear receptor. 2 NR C4-type zinc fingers span residues 31–51 (CVVCSDFASGIHYSVASCNGC) and 67–91 (CQFSGDCVVGKSVRCVCRSCRLKKC). The NR LBD domain maps to 173 to 450 (DVKAVIEDLL…LIDQLIIVGL (278 aa)).

It belongs to the nuclear hormone receptor family. In terms of tissue distribution, isoform b: Expressed in body wall muscle cells, pharyngeal muscles, rectal gland cells, vulval and uterine muscles and neurons in the head and ventral nerve cord. Isoform c: Expressed in body wall muscle cells, neurons in the head, nerve ring, ventral and dorsal nerve cords and epidermal cells in the tail.

The protein localises to the nucleus. Orphan nuclear receptor. Plays a role in morphogenesis and elongation during embryonic and larval development. Plays a role in muscle formation and motility. The protein is Nuclear hormone receptor family member nhr-40 of Caenorhabditis elegans.